Consider the following 222-residue polypeptide: Phosphoenolpyruvate guanylyltransferase (222 aa).

Positions 147, 163, and 166 each coordinate phosphoenolpyruvate.

Belongs to the CofC family.

It carries out the reaction phosphoenolpyruvate + GTP + H(+) = enolpyruvoyl-2-diphospho-5'-guanosine + diphosphate. The protein operates within cofactor biosynthesis; coenzyme F420 biosynthesis. Functionally, guanylyltransferase that catalyzes the activation of phosphoenolpyruvate (PEP) as enolpyruvoyl-2-diphospho-5'-guanosine, via the condensation of PEP with GTP. It is involved in the biosynthesis of coenzyme F420, a hydride carrier cofactor. This is Phosphoenolpyruvate guanylyltransferase from Streptosporangium roseum (strain ATCC 12428 / DSM 43021 / JCM 3005 / KCTC 9067 / NCIMB 10171 / NRRL 2505 / NI 9100).